Reading from the N-terminus, the 298-residue chain is Acidic endochitinase (298 aa).

Positions 1–29 (MKPNMACLKQVSALLLPLLFISFFKPSHA) are cleaved as a signal peptide. The GH18 domain occupies 30–298 (GGISVYWGQN…GYSGAIIGSV (269 aa)). 2 disulfide bridges follow: Cys49–Cys96 and Cys79–Cys86. Glu156 functions as the Proton donor in the catalytic mechanism. Cys185 and Cys214 are oxidised to a cystine.

It belongs to the glycosyl hydrolase 18 family. Chitinase class II subfamily.

It is found in the secreted. It localises to the extracellular space. It catalyses the reaction Random endo-hydrolysis of N-acetyl-beta-D-glucosaminide (1-&gt;4)-beta-linkages in chitin and chitodextrins.. In terms of biological role, this protein functions as a defense against chitin containing fungal pathogens. This is Acidic endochitinase from Phaseolus angularis (Azuki bean).